The following is a 503-amino-acid chain: Ribose import ATP-binding protein RbsA 1 (503 aa).

2 ABC transporter domains span residues 5-241 (IALE…VGRA) and 253-495 (IGQP…AGIE). 37–44 (GENGAGKS) provides a ligand contact to ATP.

This sequence belongs to the ABC transporter superfamily. Ribose importer (TC 3.A.1.2.1) family. In terms of assembly, the complex is composed of an ATP-binding protein (RbsA), two transmembrane proteins (RbsC) and a solute-binding protein (RbsB).

The protein localises to the cell inner membrane. It catalyses the reaction D-ribose(out) + ATP + H2O = D-ribose(in) + ADP + phosphate + H(+). Functionally, part of the ABC transporter complex RbsABC involved in ribose import. Responsible for energy coupling to the transport system. The sequence is that of Ribose import ATP-binding protein RbsA 1 from Rhizobium meliloti (strain 1021) (Ensifer meliloti).